A 193-amino-acid polypeptide reads, in one-letter code: dTTP/UTP pyrophosphatase (193 aa).

Aspartate 71 (proton acceptor) is an active-site residue.

Belongs to the Maf family. YhdE subfamily. It depends on a divalent metal cation as a cofactor.

It is found in the cytoplasm. The catalysed reaction is dTTP + H2O = dTMP + diphosphate + H(+). It carries out the reaction UTP + H2O = UMP + diphosphate + H(+). In terms of biological role, nucleoside triphosphate pyrophosphatase that hydrolyzes dTTP and UTP. May have a dual role in cell division arrest and in preventing the incorporation of modified nucleotides into cellular nucleic acids. The protein is dTTP/UTP pyrophosphatase of Geobacter sp. (strain M21).